A 399-amino-acid polypeptide reads, in one-letter code: Phosphoglycerate kinase (399 aa).

Residues 22–24, R38, 61–64, R120, and R153 each bind substrate; these read DFN and HLGR. ATP contacts are provided by residues K204, E326, and 352-355; that span reads GGDT.

The protein belongs to the phosphoglycerate kinase family. As to quaternary structure, monomer.

The protein localises to the cytoplasm. The enzyme catalyses (2R)-3-phosphoglycerate + ATP = (2R)-3-phospho-glyceroyl phosphate + ADP. Its pathway is carbohydrate degradation; glycolysis; pyruvate from D-glyceraldehyde 3-phosphate: step 2/5. This Geobacter sp. (strain M21) protein is Phosphoglycerate kinase.